Here is a 253-residue protein sequence, read N- to C-terminus: 5-oxoprolinase subunit A (253 aa).

The protein belongs to the LamB/PxpA family. As to quaternary structure, forms a complex composed of PxpA, PxpB and PxpC.

It catalyses the reaction 5-oxo-L-proline + ATP + 2 H2O = L-glutamate + ADP + phosphate + H(+). In terms of biological role, catalyzes the cleavage of 5-oxoproline to form L-glutamate coupled to the hydrolysis of ATP to ADP and inorganic phosphate. This is 5-oxoprolinase subunit A from Bacillus cereus (strain 03BB102).